The chain runs to 171 residues: Cytochrome c oxidase subunit 4 isoform 2, mitochondrial (171 aa).

The transit peptide at 1 to 28 directs the protein to the mitochondrion; that stretch reads MLPRAAWSLVLRKGGGGRRGMHSSEGTT. Residues 13–32 are disordered; it reads KGGGGRRGMHSSEGTTRGGG. Over 29 to 100 the chain is Mitochondrial matrix; sequence RGGGKMSPYT…TFAEMNRRSN (72 aa). The helical transmembrane segment at 101–126 threads the bilayer; that stretch reads EWKTVMGCVFFFIGFAALVIWWQRVY. Residues 127–171 are Mitochondrial intermembrane-facing; sequence VFPPKPITLTDERKAQQLQRMLDMKVNPVQGLASRWDYEKKQWKK.

This sequence belongs to the cytochrome c oxidase IV family. Component of the cytochrome c oxidase (complex IV, CIV), a multisubunit enzyme composed of 14 subunits. The complex is composed of a catalytic core of 3 subunits MT-CO1, MT-CO2 and MT-CO3, encoded in the mitochondrial DNA, and 11 supernumerary subunits COX4I1 (or COX4I2), COX5A, COX5B, COX6A1 (or COX6A2), COX6B1 (or COX6B2), COX6C, COX7A2 (or COX7A1), COX7B, COX7C, COX8A and NDUFA4, which are encoded in the nuclear genome. The complex exists as a monomer or a dimer and forms supercomplexes (SCs) in the inner mitochondrial membrane with NADH-ubiquinone oxidoreductase (complex I, CI) and ubiquinol-cytochrome c oxidoreductase (cytochrome b-c1 complex, complex III, CIII), resulting in different assemblies (supercomplex SCI(1)III(2)IV(1) and megacomplex MCI(2)III(2)IV(2)). Highly expressed in lung.

Its subcellular location is the mitochondrion inner membrane. Its pathway is energy metabolism; oxidative phosphorylation. Its function is as follows. Component of the cytochrome c oxidase, the last enzyme in the mitochondrial electron transport chain which drives oxidative phosphorylation. The respiratory chain contains 3 multisubunit complexes succinate dehydrogenase (complex II, CII), ubiquinol-cytochrome c oxidoreductase (cytochrome b-c1 complex, complex III, CIII) and cytochrome c oxidase (complex IV, CIV), that cooperate to transfer electrons derived from NADH and succinate to molecular oxygen, creating an electrochemical gradient over the inner membrane that drives transmembrane transport and the ATP synthase. Cytochrome c oxidase is the component of the respiratory chain that catalyzes the reduction of oxygen to water. Electrons originating from reduced cytochrome c in the intermembrane space (IMS) are transferred via the dinuclear copper A center (CU(A)) of subunit 2 and heme A of subunit 1 to the active site in subunit 1, a binuclear center (BNC) formed by heme A3 and copper B (CU(B)). The BNC reduces molecular oxygen to 2 water molecules using 4 electrons from cytochrome c in the IMS and 4 protons from the mitochondrial matrix. In Homo sapiens (Human), this protein is Cytochrome c oxidase subunit 4 isoform 2, mitochondrial.